We begin with the raw amino-acid sequence, 205 residues long: Small ribosomal subunit protein uS4 (205 aa).

Basic residues predominate over residues 1–12 (MSKRIQAKHKLD). The segment at 1–49 (MSKRIQAKHKLDRRMGQNIWGRPKSPVNRREYGPGQHGQRRKGKMSDFG) is disordered. Residues 94 to 155 (RRLDAVVYRA…SSRQLEIVIV (62 aa)) form the S4 RNA-binding domain.

It belongs to the universal ribosomal protein uS4 family. As to quaternary structure, part of the 30S ribosomal subunit. Contacts protein S5. The interaction surface between S4 and S5 is involved in control of translational fidelity.

Functionally, one of the primary rRNA binding proteins, it binds directly to 16S rRNA where it nucleates assembly of the body of the 30S subunit. In terms of biological role, with S5 and S12 plays an important role in translational accuracy. This chain is Small ribosomal subunit protein uS4, found in Methylobacterium radiotolerans (strain ATCC 27329 / DSM 1819 / JCM 2831 / NBRC 15690 / NCIMB 10815 / 0-1).